Reading from the N-terminus, the 92-residue chain is Small ribosomal subunit protein uS19 (92 aa).

The protein belongs to the universal ribosomal protein uS19 family.

Functionally, protein S19 forms a complex with S13 that binds strongly to the 16S ribosomal RNA. In Prochlorococcus marinus (strain MIT 9215), this protein is Small ribosomal subunit protein uS19.